A 288-amino-acid chain; its full sequence is Light-independent protochlorophyllide reductase iron-sulfur ATP-binding protein (288 aa).

ATP-binding positions include 12–17 and Lys41; that span reads GIGKST. Residue Ser16 coordinates Mg(2+). Positions 97 and 131 each coordinate [4Fe-4S] cluster. Residue 182–183 participates in ATP binding; sequence NR.

This sequence belongs to the NifH/BchL/ChlL family. In terms of assembly, homodimer. Protochlorophyllide reductase is composed of three subunits; ChlL, ChlN and ChlB. It depends on [4Fe-4S] cluster as a cofactor.

The catalysed reaction is chlorophyllide a + oxidized 2[4Fe-4S]-[ferredoxin] + 2 ADP + 2 phosphate = protochlorophyllide a + reduced 2[4Fe-4S]-[ferredoxin] + 2 ATP + 2 H2O. Its pathway is porphyrin-containing compound metabolism; chlorophyll biosynthesis (light-independent). Component of the dark-operative protochlorophyllide reductase (DPOR) that uses Mg-ATP and reduced ferredoxin to reduce ring D of protochlorophyllide (Pchlide) to form chlorophyllide a (Chlide). This reaction is light-independent. The L component serves as a unique electron donor to the NB-component of the complex, and binds Mg-ATP. The chain is Light-independent protochlorophyllide reductase iron-sulfur ATP-binding protein from Synechocystis sp. (strain ATCC 27184 / PCC 6803 / Kazusa).